A 213-amino-acid chain; its full sequence is Orotate phosphoribosyltransferase (213 aa).

Lysine 26 contacts 5-phospho-alpha-D-ribose 1-diphosphate. 34-35 provides a ligand contact to orotate; it reads FF. 5-phospho-alpha-D-ribose 1-diphosphate contacts are provided by residues 72–73, arginine 99, lysine 100, lysine 103, histidine 105, and 124–132; these read YK and DDVITAGTA. Orotate contacts are provided by threonine 128 and arginine 156.

The protein belongs to the purine/pyrimidine phosphoribosyltransferase family. PyrE subfamily. In terms of assembly, homodimer. It depends on Mg(2+) as a cofactor.

The catalysed reaction is orotidine 5'-phosphate + diphosphate = orotate + 5-phospho-alpha-D-ribose 1-diphosphate. It functions in the pathway pyrimidine metabolism; UMP biosynthesis via de novo pathway; UMP from orotate: step 1/2. Catalyzes the transfer of a ribosyl phosphate group from 5-phosphoribose 1-diphosphate to orotate, leading to the formation of orotidine monophosphate (OMP). The sequence is that of Orotate phosphoribosyltransferase from Vibrio vulnificus (strain YJ016).